The primary structure comprises 205 residues: Large ribosomal subunit protein uL3c (205 aa).

A disordered region spans residues 130–150; sequence RGPMSHGSKNHRQPGSIGAGT.

Belongs to the universal ribosomal protein uL3 family. Part of the 50S ribosomal subunit.

It is found in the plastid. It localises to the chloroplast. Functionally, one of the primary rRNA binding proteins, it binds directly near the 3'-end of the 23S rRNA, where it nucleates assembly of the 50S subunit. This Gracilaria tenuistipitata var. liui (Red alga) protein is Large ribosomal subunit protein uL3c (rpl3).